We begin with the raw amino-acid sequence, 651 residues long: Probable potassium transport system protein Kup (651 aa).

A run of 12 helical transmembrane segments spans residues 41 to 61 (LVLGALGVVYGDIGTSPIYAF), 82 to 102 (VVSLIFWALTLVVTIKYVLFV), 130 to 150 (LILGVGICGAALFFGDAVITP), 163 to 183 (IVAPDLTPFVVPITVVILVTL), 194 to 214 (VAIVFGPIMALWFLALGASGL), 235 to 255 (FLMISPGIAFITVGAVFLAMT), 276 to 296 (WLWIVFPCLLLNYFGQAAFIL), 309 to 329 (MMPSFALLPMVLLATAATVIA), 366 to 386 (IYIPRVNLLLGLAVVILVLGF), 395 to 415 (AYGIAVTGNMLVTTVLLYIVM), 426 to 446 (ALPIIVGFLIIDIMFFGANII), and 450 to 470 (EGGWASIGIAAILVLIMWTWV).

The protein belongs to the HAK/KUP transporter (TC 2.A.72) family.

It localises to the cell inner membrane. The catalysed reaction is K(+)(in) + H(+)(in) = K(+)(out) + H(+)(out). Functionally, transport of potassium into the cell. Likely operates as a K(+):H(+) symporter. The protein is Probable potassium transport system protein Kup of Brucella anthropi (strain ATCC 49188 / DSM 6882 / CCUG 24695 / JCM 21032 / LMG 3331 / NBRC 15819 / NCTC 12168 / Alc 37) (Ochrobactrum anthropi).